The sequence spans 284 residues: Exported repetitive protein (284 aa).

The first 22 residues, 1-22 (MPNRRRRKLSTAMSAVAALAVA), serve as a signal peptide directing secretion. The Extracellular portion of the chain corresponds to 23 to 252 (SPCAYFLVYE…MPSIMQAVQN (230 aa)). The interval 80–216 (TGSGDASTGL…SPATTSTGGG (137 aa)) is disordered. Positions 86-110 (STGLTGPGLTSPGLTSPGLTSPGLT) are enriched in low complexity. A run of 12 repeats spans residues 92–96 (PGLTS), 97–101 (PGLTS), 102–106 (PGLTS), 107–111 (PGLTD), 112–116 (PALTS), 117–121 (PGLTP), 144–148 (PALTN), 149–153 (PALTS), 154–158 (PTGAT), 159–163 (PGLTS), 164–168 (PTGLD), and 169–173 (PALGG). A 6 X 5 AA tandem repeats of P-[GA]-L-T-S region spans residues 92–121 (PGLTSPGLTSPGLTSPGLTDPALTSPGLTP). The segment at 144-173 (PALTNPALTSPTGATPGLTSPTGLDPALGG) is 6 X 5 AA approximate tandem repeats of P-[ATG]-[LG]-X-X. Over residues 145 to 165 (ALTNPALTSPTGATPGLTSPT) the composition is skewed to polar residues. Residues 202–212 (GTIPSSPATTS) show a composition bias toward low complexity. The chain crosses the membrane as a helical span at residues 253–273 (GGAAAPAASPPVPPIPAAAAV). Over 274-284 (PPTDPITVPVA) the chain is Cytoplasmic.

It to M.leprae 28 kDa antigen.

The protein resides in the cell membrane. In terms of biological role, surface-exposed protein required for multiplication and intracellular growth. The polypeptide is Exported repetitive protein (erp) (Mycobacterium bovis (strain ATCC BAA-935 / AF2122/97)).